A 608-amino-acid polypeptide reads, in one-letter code: Alpha-glycerophosphate oxidase (608 aa).

21 to 49 (DLLIIGGGITGAGVALQAAASGLETGLIE) is a binding site for FAD. Positions 393–418 (SAVSKLESSTSEKHLDPSAVSRGSSL) are disordered.

The protein belongs to the FAD-dependent glycerol-3-phosphate dehydrogenase family. FAD is required as a cofactor.

The protein localises to the cell membrane. It carries out the reaction sn-glycerol 3-phosphate + O2 = dihydroxyacetone phosphate + H2O2. It participates in membrane lipid metabolism; glycerophospholipid metabolism. The sequence is that of Alpha-glycerophosphate oxidase (glpO) from Streptococcus pneumoniae serotype 4 (strain ATCC BAA-334 / TIGR4).